Reading from the N-terminus, the 149-residue chain is CCAAT/enhancer-binding protein gamma (149 aa).

Positions 1–12 (MSKVSQQNSTPG) are enriched in polar residues. A disordered region spans residues 1 to 92 (MSKVSQQNST…SKQKAQDTLQ (92 aa)). A Glycyl lysine isopeptide (Lys-Gly) (interchain with G-Cter in SUMO2) cross-link involves residue lysine 3. Over residues 28-37 (LQQVPQLVPA) the composition is skewed to low complexity. Basic and acidic residues predominate over residues 56-72 (SPMDRNSDEYRQRRERN). In terms of domain architecture, bZIP spans 62–125 (SDEYRQRRER…SVLKDLFLEH (64 aa)). The segment at 66 to 93 (RQRRERNNMAVKKSRLKSKQKAQDTLQR) is basic motif. Residues 97-118 (LKEENERLEAKIKLLTKELSVL) form a leucine-zipper region. Residues 128–149 (NLADNVQPSSTENTTNPDKAGQ) are disordered. A compositionally biased stretch (polar residues) spans 131–149 (DNVQPSSTENTTNPDKAGQ).

The protein belongs to the bZIP family. C/EBP subfamily. In terms of assembly, binds DNA as a dimer and can form stable heterodimers with CEBPA and CEBPB. Interacts with ZNF638; this interaction increases transcriptional activation.

The protein localises to the nucleus. Transcription factor that binds to the promoter and the enhancer regions of target genes. Binds to the enhancer element PRE-I (positive regulatory element-I) of the IL-4 gene. Binds to the promoter and the enhancer of the immunoglobulin heavy chain. Binds to GPE1, a cis-acting element in the G-CSF gene promoter. The polypeptide is CCAAT/enhancer-binding protein gamma (CEBPG) (Bos taurus (Bovine)).